The following is a 249-amino-acid chain: MQTSSRTYDYRRLKAEYKQLSASSSTDKAMHRLREAVHAVNILLPTPITLEMALLSADGVRKLVRGQSLARTYSACLRNLECLSRHVPGRGNPGLDAVVETHRENAQRVADTCAAALLHMYMSIGTGRTDAFVEHAIQLTAATETAMSDIALVERALGLTHPHNERSPASMDESTGMKNCAVLSHMNDNKDDAVNMEPGYNTTIDRLISSPLLSQSKRERTIISTPAVTPKDNCPPVKFSRENNLITEL.

This sequence belongs to the herpesviridae UL51 family. As to quaternary structure, oligomerizes. Interacts with MDV019; this interaction mediates MDV019 incorporation to virions. Phosphorylated.

The protein resides in the virion tegument. It localises to the host cytoplasm. It is found in the host Golgi apparatus. Its function is as follows. Plays several roles during the time course of infection, including egress of virus particles from the perinuclear space and secondary envelopment of cytoplasmic capsids that bud into specific trans-Golgi network (TGN)-derived membranes. This is Tegument protein UL51 homolog (MDV065) from Gallus gallus (Chicken).